Reading from the N-terminus, the 772-residue chain is Transcription factor sdnS (772 aa).

The zn(2)-C6 fungal-type DNA-binding region spans 23–53 (CWECRRRKIRCQFGAGNDTVCLPCQARGSTC). Disordered regions lie at residues 94-121 (EAGG…SAQN) and 156-180 (ASML…NSKT). Over residues 100–121 (ANRSTTQSNRGSRSPSPDSAQN) the composition is skewed to polar residues.

It localises to the nucleus. It participates in antibiotic biosynthesis. Functionally, transcription factor; part of the gene cluster that mediates the biosynthesis of sordarin and hypoxysordarin, glycoside antibiotics with a unique tetracyclic diterpene aglycone structure. First, the geranylgeranyl diphosphate synthase sdnC constructs GGDP from farnesyl diphosphate and isopentenyl diphosphate. The diterpene cyclase sdnA then catalyzes the cyclization of GGDP to afford cycloaraneosene. Cycloaraneosene is then hydroxylated four times by the putative cytochrome P450 monooxygenases sdnB, sdnE, sdnF and sdnH to give a hydroxylated cycloaraneosene derivative such as cycloaraneosene-8,9,13,19-tetraol. Although the order of the hydroxylations is unclear, at least C8, C9 and C13 of the cycloaraneosene skeleton are hydroxylated before the sordaricin formation. Dehydration of the 13-hydroxy group of the hydroxylated cycloaraneosene derivative might be catalyzed by an unassigned hypothetical protein such as sdnG and sdnP to construct the cyclopentadiene moiety. The FAD-dependent oxidoreductase sdnN is proposed to catalyze the oxidation at C9 of the hydroxylated cycloaraneosene derivative and also catalyze the Baeyer-Villiger oxidation to give the lactone intermediate. The presumed lactone intermediate would be hydrolyzed to give an acrolein moiety and a carboxylate moiety. Then, [4+2]cycloaddition would occur between the acrolein moiety and the cyclopentadiene moiety to give sordaricin. SdnN might also be involved in the [4+2]cycloaddition after the hypothesized oxidation to accommodate the oxidized product and prompt the [4+2]cycloaddition. GDP-6-deoxy-D-altrose may be biosynthesized from GDP-D-mannose by the putative GDP-mannose-4,6-dehydratase sdnI and the short-chain dehydrogenase sdnK. The glycosyltransferase sdnJ catalyzes the attachment of 6-deoxy-D-altrose onto the 19-hydroxy group of sordaricin to give 4'-O-demethylsordarin. The methyltransferase sdnD would complete the biosynthesis of sordarin. Sordarin can be further modified into hypoxysordarin. The unique acyl chain at the 3'-hydroxy group of hypoxysordarin would be constructed by an iterative type I PKS sdnO and the trans-acting polyketide methyltransferase sdnL. SdnL would be responsible for the introduction of an alpha-methyl group of the polyketide chain. Alternatively, the beta-lactamase-like protein sdnR might be responsible for the cleavage and transfer of the polyketide chain from the PKS sdnO to sordarin. Two putative cytochrome P450 monooxygenases, sdnQ and sdnT, might catalyze the epoxidations of the polyketide chain to complete the biosynthesis of hypoxysordarin. Transcriptional regulators sdnM and sdnS are presumably encoded for the transcriptional regulation of the expression of the sdn gene cluster. The polypeptide is Transcription factor sdnS (Sordaria araneosa (Pleurage araneosa)).